The primary structure comprises 430 residues: Terminal nucleotidyltransferase 5B (430 aa).

The segment at 1–46 (MMPSESETESRDRAAAQVGTAAAAAVAKAAPAGGGPDPEASSASLG) is disordered. The span at 15-44 (AAQVGTAAAAAVAKAAPAGGGPDPEASSAS) shows a compositional bias: low complexity.

The protein belongs to the TENT family.

It is found in the cytoplasm. The protein resides in the nucleus. It carries out the reaction RNA(n) + ATP = RNA(n)-3'-adenine ribonucleotide + diphosphate. Catalyzes the transfer of one adenosine molecule from an ATP to an mRNA poly(A) tail bearing a 3'-OH terminal group in an ATP hydrolysis-dependent manner. May be involved in maintaining the translation efficiency of at least some genes through preventing degradation of their mRNAs. Prefers RNA molecules that are adenosine-rich close to 3'-end. In addition, may inhibit cell proliferation and cell cycle progression through ubiquitination of beta-catenin/CTNNB1. This Bos taurus (Bovine) protein is Terminal nucleotidyltransferase 5B.